We begin with the raw amino-acid sequence, 224 residues long: Redox-sensing transcriptional repressor Rex (224 aa).

Positions 17–56 (RYHRCLEELLKNDIKRISSKELSERMGVTASQIRQDLNNF) form a DNA-binding region, H-T-H motif. NAD(+) is bound at residue 91-96 (GAGNLG).

The protein belongs to the transcriptional regulatory Rex family. As to quaternary structure, homodimer.

The protein localises to the cytoplasm. Its function is as follows. Modulates transcription in response to changes in cellular NADH/NAD(+) redox state. The chain is Redox-sensing transcriptional repressor Rex from Caldanaerobacter subterraneus subsp. tengcongensis (strain DSM 15242 / JCM 11007 / NBRC 100824 / MB4) (Thermoanaerobacter tengcongensis).